The primary structure comprises 218 residues: Glutathione S-transferase Mu 2 (218 aa).

The region spanning 2 to 88 is the GST N-terminal domain; the sequence is PMTLGYWDIR…YLARKHNLCG (87 aa). 7–8 provides a ligand contact to glutathione; the sequence is YW. Phosphoserine occurs at positions 27 and 44. Glutathione contacts are provided by residues 43–46, Lys50, 59–60, and 72–73; these read RSQW, NL, and QS. Residues 90-208 form the GST C-terminal domain; that stretch reads TEEERIRVDI…KSSRFLSKPI (119 aa). A substrate-binding site is contributed by Tyr116. A Phosphoserine modification is found at Ser117.

It belongs to the GST superfamily. Mu family. Homodimer.

Its subcellular location is the cytoplasm. It carries out the reaction RX + glutathione = an S-substituted glutathione + a halide anion + H(+). The catalysed reaction is 11(S)-hydroxy-14(S),15(S)-epoxy-(5Z,8Z,12E)-eicosatrienoate + glutathione = (11S,15S)-dihydroxy-14(R)-S-glutathionyl-(5Z,8Z,12E)-eicosatrienoate. Conjugation of reduced glutathione to a wide number of exogenous and endogenous hydrophobic electrophiles. Participates in the formation of novel hepoxilin regioisomers. The chain is Glutathione S-transferase Mu 2 from Mus musculus (Mouse).